Consider the following 199-residue polypeptide: MHKKSFVTTLSVCVMILGLAALGFAQEAAEGGAHHANSGAQMKDFMWRTIDFALLVAIAVWALKKADVKGSLAARRSGIEKTLQEAVAAKEAAEKKFAEYSQRLDQANKEIEVISANMKREGELEKERIIAEANDAAARIKAQAEASAAQEVLKAKAELRAEAAKLAVELAEQKIVKNIAKGDQDKLVGEYISKVVTLH.

The helical transmembrane segment at S5–A25 threads the bilayer.

This sequence belongs to the ATPase B chain family. As to quaternary structure, F-type ATPases have 2 components, F(1) - the catalytic core - and F(0) - the membrane proton channel. F(1) has five subunits: alpha(3), beta(3), gamma(1), delta(1), epsilon(1). F(0) has three main subunits: a(1), b(2) and c(10-14). The alpha and beta chains form an alternating ring which encloses part of the gamma chain. F(1) is attached to F(0) by a central stalk formed by the gamma and epsilon chains, while a peripheral stalk is formed by the delta and b chains.

Its subcellular location is the cell inner membrane. F(1)F(0) ATP synthase produces ATP from ADP in the presence of a proton or sodium gradient. F-type ATPases consist of two structural domains, F(1) containing the extramembraneous catalytic core and F(0) containing the membrane proton channel, linked together by a central stalk and a peripheral stalk. During catalysis, ATP synthesis in the catalytic domain of F(1) is coupled via a rotary mechanism of the central stalk subunits to proton translocation. Its function is as follows. Component of the F(0) channel, it forms part of the peripheral stalk, linking F(1) to F(0). This is ATP synthase subunit b from Citrifermentans bemidjiense (strain ATCC BAA-1014 / DSM 16622 / JCM 12645 / Bem) (Geobacter bemidjiensis).